A 367-amino-acid polypeptide reads, in one-letter code: MTSRNYLLLTPGPLTTSRTVKEAMLFDSCTWDDDYNIGVVEQIRQQLTALATASEGYTSVLLQGSGSYAVEAVLGSALGPQDKVLIVSNGAYGARMVEMAGLMGIAHHAYDCGEVARPDVQAIDAILNADPTISHIAMVHSETTTGMLNPIDEVGALAHRYGKTYIVDAMSSFGGIPMDIAALHIDYLISSANKCIQGVPGFAFVIAREQKLAACKGRSRSLSLDLYAQWRCMEDNHGKWRFTSPTHTVLAFAQALKELAEEGGVAARHQRYQQNQRSLVAGMRALGFNTLLDDELHSPIITAFYSPEDPQYRFSEFYRRLKEQGFVIYPGKVSQSDCFRIGNIGEVYAADITALLTAIRTAMYWTK.

The residue at position 194 (Lys-194) is an N6-(pyridoxal phosphate)lysine.

Belongs to the class-V pyridoxal-phosphate-dependent aminotransferase family. PhnW subfamily. In terms of assembly, homodimer. Pyridoxal 5'-phosphate is required as a cofactor.

It carries out the reaction (2-aminoethyl)phosphonate + pyruvate = phosphonoacetaldehyde + L-alanine. In terms of biological role, involved in phosphonate degradation. The polypeptide is 2-aminoethylphosphonate--pyruvate transaminase (Salmonella schwarzengrund (strain CVM19633)).